Here is a 201-residue protein sequence, read N- to C-terminus: MELVVKDVQNVLSVSEIIFARDFNEALIHQVVIAYSASTRQGTRAQKSRAEVSGSGRKPWRQKGTGRARAGSFRSPIWRSGGVTFAAKPQEHSQKVNKKMYRGALKSIFSELIRQKRLIVFENFSLDAPKTKLLVQKLKDINLKNVLIVTNKIDNNLFLASRNLYSVDVKDVHSIDPVSLIAFDHVVITVEAVKRIEEILS.

Positions 44–68 are disordered; that stretch reads RAQKSRAEVSGSGRKPWRQKGTGRA.

This sequence belongs to the universal ribosomal protein uL4 family. Part of the 50S ribosomal subunit.

Functionally, one of the primary rRNA binding proteins, this protein initially binds near the 5'-end of the 23S rRNA. It is important during the early stages of 50S assembly. It makes multiple contacts with different domains of the 23S rRNA in the assembled 50S subunit and ribosome. Its function is as follows. Forms part of the polypeptide exit tunnel. This is Large ribosomal subunit protein uL4 from Buchnera aphidicola subsp. Acyrthosiphon pisum (strain APS) (Acyrthosiphon pisum symbiotic bacterium).